An 85-amino-acid chain; its full sequence is CDC42 small effector protein homolog (85 aa).

S-palmitoyl cysteine attachment occurs at residues cysteine 14 and cysteine 15. Residues 37–50 (IGNPTNFVHTGHIG) form the CRIB domain. 2 positions are modified to phosphoserine: serine 78 and serine 81.

Belongs to the CDC42SE/SPEC family.

It localises to the cytoplasm. The protein resides in the cytoskeleton. Its subcellular location is the cell membrane. In terms of biological role, probably involved in the organization of the actin cytoskeleton by acting downstream of CDC42, inducing actin filament assembly. In Drosophila melanogaster (Fruit fly), this protein is CDC42 small effector protein homolog (Spec2).